The chain runs to 246 residues: MADS-box protein EJ2 (246 aa).

An MADS-box domain is found at 1 to 61; it reads MGRGRVELKR…GKLYEFCSTS (61 aa). A K-box domain is found at 87 to 177; sequence TQNNYHEYLR…RRKLEESVAG (91 aa).

Its subcellular location is the nucleus. Its function is as follows. MADS-box transcription factor that acts redundantly with J2 to control meristem maturation and inflorescence architecture. The sequence is that of MADS-box protein EJ2 from Solanum lycopersicum (Tomato).